The chain runs to 630 residues: GATA-type transcription factor SRE1 (630 aa).

Disordered stretches follow at residues 1–139 (MTGL…TPLW) and 162–203 (DRPT…RLTD). Polar residues-rich tracts occupy residues 66–82 (DNTQ…QLQN), 115–133 (KAQS…NCGT), and 175–196 (YGSS…TNDG). The GATA-type 1 zinc finger occupies 128-152 (CSNCGTKRTPLWRRSPTGATICNAC). The interval 219 to 237 (CPGGGSCNGTGGAEGCDGC) is cystein-rich region (CRR). The tract at residues 256–283 (HTPRTSPQVSTQGGPGSTEGDAGSSNPE) is disordered. Positions 258 to 267 (PRTSPQVSTQ) are enriched in polar residues. Residues 291-315 (CQNCQTTVTPLWRRDENGHPICNAC) form a GATA-type 2 zinc finger. Positions 339-609 (KRVVPAMREQ…AKAERRARLQ (271 aa)) are disordered. Positions 349-363 (SPPSATQSSNGSVSP) are enriched in polar residues. Composition is skewed to low complexity over residues 436–447 (NNHNNGETTNTH) and 492–503 (SSSSASFPNNNP). Polar residues predominate over residues 504 to 513 (GRFNSISSLL). The segment covering 558-568 (SHSPPRFSPSL) has biased composition (low complexity). A compositionally biased stretch (basic and acidic residues) spans 595–609 (VDHRDAKAERRARLQ). The stretch at 595-630 (VDHRDAKAERRARLQREAQDMREALKAKERELALLE) forms a coiled coil.

It is found in the nucleus. Functionally, GATA-type transcription repressor that regulates iron- acquisition genes through specific binding the GATA sequence element 5'-(G/A)ATC(T/A)GATAA-3' of target promoters in an iron- and zinc-dependent manner. Regulation occurs via direct binding of iron ions. Iron acquisition regulation is critical for survival under both iron-limiting conditions (to acquire essential iron) and iron-replete conditions (to limit iron toxicity). SRE1 targets include genes encoding a number of key iron-regulated factors such as those involved in siderophore biosynthesis, presumed ferric reductase activity, iron-responsive transcriptional regulation, oxidative stress response, as well as genes encoding a number of putative oxidoreductases, metabolic and mitochondrial enzymes, superoxide dismutase, and genes previously identified as induced during nitrosative stress. The protein is GATA-type transcription factor SRE1 of Ajellomyces capsulatus (Darling's disease fungus).